The sequence spans 63 residues: Hirudin-P6 (63 aa).

The tract at residues 1-3 (MRY) is interaction with thrombin active site. Cystine bridges form between C6–C14, C16–C28, and C22–C37. The span at 35–55 (KKCVEGEGTRKPQNEGQHDFD) shows a compositional bias: basic and acidic residues. A disordered region spans residues 35 to 63 (KKCVEGEGTRKPQNEGQHDFDPIPEEYLS). T43 carries O-linked (GalNAc...) threonine glycosylation. Residues 53-63 (DFDPIPEEYLS) are interaction with fibrinogen-binding exosite of thrombin. Y61 is subject to Sulfotyrosine.

The protein belongs to the protease inhibitor I14 (hirudin) family. In terms of processing, O-linked glycan consists of Fuc-Gal-GalNAc trisaccharide.

It is found in the secreted. Functionally, hirudin is a potent thrombin-specific protease inhibitor. It forms a stable non-covalent complex with alpha-thrombin, thereby abolishing its ability to cleave fibrinogen. The polypeptide is Hirudin-P6 (Hirudinaria manillensis (Asian medical leech)).